The following is a 283-amino-acid chain: Pantothenate synthetase (283 aa).

26–33 (MGNLHEGH) is a binding site for ATP. Residue H33 is the Proton donor of the active site. Position 57 (Q57) interacts with (R)-pantoate. Residue Q57 coordinates beta-alanine. 144–147 (GKKD) is a binding site for ATP. Q150 contributes to the (R)-pantoate binding site. ATP contacts are provided by residues I173 and 181 to 184 (LSSR).

This sequence belongs to the pantothenate synthetase family. In terms of assembly, homodimer.

The protein localises to the cytoplasm. It carries out the reaction (R)-pantoate + beta-alanine + ATP = (R)-pantothenate + AMP + diphosphate + H(+). The protein operates within cofactor biosynthesis; (R)-pantothenate biosynthesis; (R)-pantothenate from (R)-pantoate and beta-alanine: step 1/1. Catalyzes the condensation of pantoate with beta-alanine in an ATP-dependent reaction via a pantoyl-adenylate intermediate. In Polynucleobacter necessarius subsp. necessarius (strain STIR1), this protein is Pantothenate synthetase.